The primary structure comprises 970 residues: Anaphase-promoting complex subunit 3 (970 aa).

4 TPR repeats span residues 35 to 68, 74 to 107, 142 to 175, and 185 to 218; these read EDNL…TMIK, ALSN…NNNN, NNNS…NSIS, and GSVY…YPFL. A disordered region spans residues 106–149; it reads NNNNNNNNNNNNNNNNNNNNNNNKDKCNNSNKNNDSNNNSNSNN. The segment at 274-300 is disordered; it reads KVNNNNNNNNNNNNNINNNNSSNKNNE. TPR repeat units lie at residues 319–353 and 361–394; these read IKPN…TPIN and TNQQ…TPQT. Disordered regions lie at residues 358–379, 414–525, and 556–582; these read IQQT…PSQQ, PIPM…TTTT, and SSLS…HNKS. Low complexity predominate over residues 359–379; that stretch reads QQTNQQQQQQQQQQPQQPSQQ. Over residues 424–443 the composition is skewed to polar residues; sequence SKGSQHPPSSNSQTPYTPST. The segment covering 446 to 460 has biased composition (basic residues); the sequence is VHHHQKQQPHQHKKS. A compositionally biased stretch (low complexity) spans 500–525; that stretch reads TSSTSKQQQQQQQTKQQTTTTTTTTT. 9 TPR repeats span residues 546-580, 636-671, 672-705, 740-773, 775-807, 808-841, 843-876, 878-910, and 911-944; these read TEEF…HHHN, LELF…QYRT, GWVL…EPYR, PYSW…DPDM, YAYT…DPRH, YNAF…NESS, VLCC…QPKN, FAKF…EPKE, and TPIY…DPKN. Residues 570–580 are compositionally biased toward basic residues; sequence YQQHHHLHHHN.

Belongs to the APC3/CDC27 family. The APC/C is composed of at least 13 subunits that stay tightly associated throughout the cell cycle: anapc1, anapc2, anapc3, anapc4, anapc5, anapc6, anapc7, anapc8, anapc10, anapc11, cdc20, cdc26 and cdh1.

It is found in the nucleus. It participates in protein modification; protein ubiquitination. Functionally, component of the anaphase promoting complex/cyclosome (APC/C), a cell cycle-regulated E3 ubiquitin-protein ligase complex that controls progression through mitosis and the G1 phase of the cell cycle. This chain is Anaphase-promoting complex subunit 3 (anapc3), found in Dictyostelium discoideum (Social amoeba).